The chain runs to 129 residues: Large ribosomal subunit protein uL14m (129 aa).

This sequence belongs to the universal ribosomal protein uL14 family. Component of the mitochondrial ribosome large subunit (39S) which comprises a 16S rRNA and about 50 distinct proteins.

The protein localises to the mitochondrion. This is Large ribosomal subunit protein uL14m (mrpl14) from Dictyostelium discoideum (Social amoeba).